The sequence spans 314 residues: Hydroxyacyl-coenzyme A dehydrogenase, mitochondrial (314 aa).

A mitochondrion-targeting transit peptide spans 1–12; sequence MAFATRQLVRSL. NAD(+)-binding positions include 34–39 and D57; that span reads GGGLMG. Positions 73 and 80 each coordinate CoA. Position 80 is an N6-succinyllysine (K80). Residues K81 and K87 each carry the N6-acetyllysine; alternate modification. 2 positions are modified to N6-succinyllysine; alternate: K81 and K87. An NAD(+)-binding site is contributed by E122. K125 carries the post-translational modification N6-acetyllysine. K127 contributes to the NAD(+) binding site. K127 is modified (N6-(2-hydroxyisobutyryl)lysine). N6-acetyllysine; alternate is present on K136. K136 is subject to N6-succinyllysine; alternate. The NAD(+) site is built by S149 and N173. S149 is a CoA binding site. The residue at position 179 (K179) is an N6-acetyllysine. An N6-acetyllysine; alternate mark is found at K185, K192, and K202. K185, K192, and K202 each carry N6-succinyllysine; alternate. Position 206 is an N6-succinyllysine (K206). N6-acetyllysine; alternate is present on residues K212 and K241. Residues K212 and K241 each carry the N6-succinyllysine; alternate modification. NAD(+) is bound at residue K305. K312 is modified (N6-acetyllysine; alternate). K312 carries the N6-succinyllysine; alternate modification.

Belongs to the 3-hydroxyacyl-CoA dehydrogenase family. As to quaternary structure, homodimer. Interacts with GLUD1; this interaction inhibits the activation of glutamate dehydrogenase 1 (GLUD1). In terms of processing, succinylation at Lys-81, adjacent to a coenzyme A binding site. Desuccinylated by SIRT5.

The protein resides in the mitochondrion matrix. It catalyses the reaction a (3S)-3-hydroxyacyl-CoA + NAD(+) = a 3-oxoacyl-CoA + NADH + H(+). The enzyme catalyses (3S)-3-hydroxybutanoyl-CoA + NAD(+) = acetoacetyl-CoA + NADH + H(+). The catalysed reaction is (3S)-hydroxydecanoyl-CoA + NAD(+) = 3-oxodecanoyl-CoA + NADH + H(+). It carries out the reaction (3S)-hydroxyhexadecanoyl-CoA + NAD(+) = 3-oxohexadecanoyl-CoA + NADH + H(+). Its pathway is lipid metabolism; fatty acid beta-oxidation. In terms of biological role, mitochondrial fatty acid beta-oxidation enzyme that catalyzes the third step of the beta-oxidation cycle for medium and short-chain 3-hydroxy fatty acyl-CoAs (C4 to C10). Plays a role in the control of insulin secretion by inhibiting the activation of glutamate dehydrogenase 1 (GLUD1), an enzyme that has an important role in regulating amino acid-induced insulin secretion. Plays a role in the maintenance of normal spermatogenesis through the reduction of fatty acid accumulation in the testes. The sequence is that of Hydroxyacyl-coenzyme A dehydrogenase, mitochondrial (HADH) from Sus scrofa (Pig).